We begin with the raw amino-acid sequence, 109 residues long: Ycf20-like protein (109 aa).

It belongs to the ycf20 family.

This chain is Ycf20-like protein, found in Synechocystis sp. (strain ATCC 27184 / PCC 6803 / Kazusa).